A 196-amino-acid chain; its full sequence is SPRY domain-containing protein 7 (196 aa).

Ala-2 is modified (N-acetylalanine). In terms of domain architecture, B30.2/SPRY spans 2–184 (AASVFCCLRC…FSEFYHTPPP (183 aa)).

The polypeptide is SPRY domain-containing protein 7 (SPRYD7) (Bos taurus (Bovine)).